The following is a 291-amino-acid chain: Glycine--tRNA ligase alpha subunit (291 aa).

The protein belongs to the class-II aminoacyl-tRNA synthetase family. As to quaternary structure, tetramer of two alpha and two beta subunits.

It localises to the cytoplasm. It carries out the reaction tRNA(Gly) + glycine + ATP = glycyl-tRNA(Gly) + AMP + diphosphate. This chain is Glycine--tRNA ligase alpha subunit, found in Coprothermobacter proteolyticus (strain ATCC 35245 / DSM 5265 / OCM 4 / BT).